Consider the following 168-residue polypeptide: Variant surface antigen D (168 aa).

A signal peptide spans 1–29 (MKKSIFSKKLLVSFGSLVTLAAIPLIAIS). Cys-30 carries N-palmitoyl cysteine lipidation. Residue Cys-30 is the site of S-diacylglycerol cysteine attachment. A disordered region spans residues 33–168 (TNTDQSQQPG…STSTSNMNTR (136 aa)). Low complexity-rich tracts occupy residues 35–44 (TDQSQQPGSG) and 52–71 (GTTT…ESGT). A compositionally biased stretch (gly residues) spans 72-81 (TTGGQTGTTT). 7 consecutive repeat copies span residues 81 to 92 (TGGQSDSTSTSK), 93 to 104 (EQGSSDSTSTSK), 105 to 116 (EQGSSDSTSTSK), 117 to 128 (EQGSSDSTSTSK), 129 to 140 (EQGSSDSTSTSK), 141 to 152 (EQGSSDSTSTSK), and 153 to 164 (EQGSSDSTSTSN). The interval 81–164 (TGGQSDSTST…GSSDSTSTSN (84 aa)) is 7 X 12 AA tandem repeats. The span at 82–168 (GGQSDSTSTS…STSTSNMNTR (87 aa)) shows a compositional bias: low complexity.

It is found in the cell membrane. Its function is as follows. Responsible for the antigenic diversity for host adaptation. Expression in E.coli of a construct containing vlpD, vlpE, and vlpF yields antigenically distinguishable products corresponding to each gene. The chain is Variant surface antigen D (vlpD) from Mesomycoplasma hyorhinis (Mycoplasma hyorhinis).